Here is a 221-residue protein sequence, read N- to C-terminus: Iron-sulfur cluster repair protein YtfE (221 aa).

The protein belongs to the RIC family. YtfE subfamily. As to quaternary structure, homodimer.

The protein resides in the cytoplasm. Functionally, di-iron-containing protein involved in the repair of iron-sulfur clusters damaged by oxidative and nitrosative stress conditions. This Pectobacterium carotovorum subsp. carotovorum (strain PC1) protein is Iron-sulfur cluster repair protein YtfE.